A 719-amino-acid chain; its full sequence is Polyphosphate kinase (719 aa).

Position 54 (Asn-54) interacts with ATP. Arg-379 and Arg-409 together coordinate Mg(2+). The region spanning 434–468 is the PLD phosphodiesterase domain; it reads THLKTHSKIALVVKRMNNKLTSFIHLGTGNYNDKT. His-439 acts as the Phosphohistidine intermediate in catalysis. Residues Tyr-472, Arg-568, and His-596 each coordinate ATP.

The protein belongs to the polyphosphate kinase 1 (PPK1) family. Requires Mg(2+) as cofactor. An intermediate of this reaction is the autophosphorylated ppk in which a phosphate is covalently linked to a histidine residue through a N-P bond.

It carries out the reaction [phosphate](n) + ATP = [phosphate](n+1) + ADP. Its function is as follows. Catalyzes the reversible transfer of the terminal phosphate of ATP to form a long-chain polyphosphate (polyP). This is Polyphosphate kinase from Staphylococcus saprophyticus subsp. saprophyticus (strain ATCC 15305 / DSM 20229 / NCIMB 8711 / NCTC 7292 / S-41).